Here is a 66-residue protein sequence, read N- to C-terminus: Large ribosomal subunit protein bL33c (66 aa).

It belongs to the bacterial ribosomal protein bL33 family.

The protein localises to the plastid. It localises to the chloroplast. The polypeptide is Large ribosomal subunit protein bL33c (Acorus calamus (Sweet flag)).